A 141-amino-acid chain; its full sequence is uncharacterized protein (141 aa).

The next 2 membrane-spanning stretches (helical) occupy residues 20–42 and 52–74; these read FLVNLPVVICLAAYLVSQVFCLA and LHLCTFFTFFTSFLLVPLAIFTL.

The protein localises to the cell membrane. This is an uncharacterized protein from Archaeoglobus fulgidus (strain ATCC 49558 / DSM 4304 / JCM 9628 / NBRC 100126 / VC-16).